A 1577-amino-acid polypeptide reads, in one-letter code: Probable serine/threonine-protein kinase gdt9 (1577 aa).

An N-terminal signal peptide occupies residues 1–16 (MKTFLLIFLLICVCKG). The Extracellular portion of the chain corresponds to 17–966 (ITNITTPSIY…NNEDNHKKLV (950 aa)). Residues 967-987 (IALSVSIPVAALLVILCFGIF) traverse the membrane as a helical segment. Residues 988–1577 (ICYNNNKKNK…SLVKIFKRFN (590 aa)) are Cytoplasmic-facing. Residues 998–1014 (NETKGKDIETNTDKKDD) are compositionally biased toward basic and acidic residues. Disordered regions lie at residues 998-1019 (NETK…NENE) and 1050-1128 (TLPP…FPTI). Residues 1050 to 1082 (TLPPQSTISIDTSPSSENTTFTESLTPKKSATV) are compositionally biased toward polar residues. The segment covering 1091–1115 (NSTNESTVSNSSSENNSDNNNNNNN) has biased composition (low complexity). The Protein kinase domain maps to 1290–1573 (LDFDEICGQG…EIVFSLVKIF (284 aa)). ATP contacts are provided by residues 1296–1304 (CGQGTYGMV) and Lys1317. Residue Asp1436 is the Proton acceptor of the active site.

This sequence in the N-terminal section; belongs to the GDT family. The protein in the C-terminal section; belongs to the protein kinase superfamily. TKL Ser/Thr protein kinase family.

The protein resides in the membrane. It carries out the reaction L-seryl-[protein] + ATP = O-phospho-L-seryl-[protein] + ADP + H(+). It catalyses the reaction L-threonyl-[protein] + ATP = O-phospho-L-threonyl-[protein] + ADP + H(+). This Dictyostelium discoideum (Social amoeba) protein is Probable serine/threonine-protein kinase gdt9 (gdt9).